The primary structure comprises 227 residues: Phosphoribosylformylglycinamidine synthase subunit PurQ (227 aa).

In terms of domain architecture, Glutamine amidotransferase type-1 spans 3–225; sequence FAVIVLPGSN…VKNWRDTHVT (223 aa). Cys86 functions as the Nucleophile in the catalytic mechanism. Residues His194 and Glu196 contribute to the active site.

As to quaternary structure, part of the FGAM synthase complex composed of 1 PurL, 1 PurQ and 2 PurS subunits.

The protein resides in the cytoplasm. It carries out the reaction N(2)-formyl-N(1)-(5-phospho-beta-D-ribosyl)glycinamide + L-glutamine + ATP + H2O = 2-formamido-N(1)-(5-O-phospho-beta-D-ribosyl)acetamidine + L-glutamate + ADP + phosphate + H(+). The catalysed reaction is L-glutamine + H2O = L-glutamate + NH4(+). Its pathway is purine metabolism; IMP biosynthesis via de novo pathway; 5-amino-1-(5-phospho-D-ribosyl)imidazole from N(2)-formyl-N(1)-(5-phospho-D-ribosyl)glycinamide: step 1/2. In terms of biological role, part of the phosphoribosylformylglycinamidine synthase complex involved in the purines biosynthetic pathway. Catalyzes the ATP-dependent conversion of formylglycinamide ribonucleotide (FGAR) and glutamine to yield formylglycinamidine ribonucleotide (FGAM) and glutamate. The FGAM synthase complex is composed of three subunits. PurQ produces an ammonia molecule by converting glutamine to glutamate. PurL transfers the ammonia molecule to FGAR to form FGAM in an ATP-dependent manner. PurS interacts with PurQ and PurL and is thought to assist in the transfer of the ammonia molecule from PurQ to PurL. In Bacillus pumilus (strain SAFR-032), this protein is Phosphoribosylformylglycinamidine synthase subunit PurQ.